The chain runs to 299 residues: Tryptophan prenyltransferase ComQ (299 aa).

2 residues coordinate Mg(2+): Asp67 and Asp71.

Belongs to the FPP/GGPP synthase family. The cofactor is Mg(2+).

The protein localises to the cell membrane. It carries out the reaction L-tryptophyl-[protein] + (2E,6E)-farnesyl diphosphate = (2S,3R)-3-farnesyl-2,3-dihydro-2,N(alpha)-cyclo-L-tryptophyl-[protein] + diphosphate. Part of a major quorum-sensing system that regulates the development of genetic competence. Involved in the maturation of the competence pheromone ComX. Acts by catalyzing the transfer of a farnesyl group on the ComX pheromone. Shows weak geranylation activity with geranyl diphosphate (GPP). This Bacillus subtilis (strain 168) protein is Tryptophan prenyltransferase ComQ.